Consider the following 107-residue polypeptide: MDNCIFCKIAAKEIPAQTVYEDGEMVCFKDINPAAPLHLLLIPKVHFDSLAHAAPEHQPLLGKMMLKVPEIAKASGLTDGFKTLINTGKGGGQEVFHLHIHIMGTPV.

Residues 5–107 (IFCKIAAKEI…LHIHIMGTPV (103 aa)) enclose the HIT domain. The Histidine triad motif signature appears at 97-101 (HLHIH).

This Neisseria gonorrhoeae protein is Protein HitA (hitA).